The chain runs to 73 residues: Neurogranin (73 aa).

The 30-residue stretch at 26–55 (ANAAAAKIQASFRGHMTRKKIKGGEIDRKT) folds into the IQ domain. Ser-36 carries the phosphoserine; by PKC modification. Basic and acidic residues predominate over residues 47-59 (KGGEIDRKTKDAE). Residues 47-73 (KGGEIDRKTKDAECANSTRGGDLRNGD) form a disordered region.

The protein belongs to the neurogranin family.

Its function is as follows. Acts as a 'third messenger' substrate of protein kinase C-mediated molecular cascades during synaptic development and remodeling. Binds to calmodulin in the absence of calcium. The chain is Neurogranin (NRGN) from Serinus canaria (Island canary).